We begin with the raw amino-acid sequence, 621 residues long: Chaperone protein HtpG (621 aa).

Residues 1–328 form an a; substrate-binding region; the sequence is MTQEKKKFDA…SEDLPLNISR (328 aa). The segment at 329 to 544 is b; that stretch reads ESLQHNSVLE…DSAMDIRMER (216 aa). A disordered region spans residues 475–495; the sequence is SDIDVEQTTSQSEDKNTHSKK. Residues 486–495 show a composition bias toward basic and acidic residues; that stretch reads SEDKNTHSKK. The c stretch occupies residues 545–621; the sequence is FLIEQKQITA…LNDIVQKAIL (77 aa).

Belongs to the heat shock protein 90 family. Homodimer.

Its subcellular location is the cytoplasm. Functionally, molecular chaperone. Has ATPase activity. This is Chaperone protein HtpG from Rickettsia akari (strain Hartford).